The primary structure comprises 399 residues: S-adenosylmethionine synthase (399 aa).

An ATP-binding site is contributed by H17. Residue D19 coordinates Mg(2+). Residue E45 coordinates K(+). L-methionine is bound by residues E58 and Q101. Residues 101–111 (QSPDIAQGVDE) are flexible loop. ATP-binding positions include 177 to 179 (DAK), 244 to 245 (RF), D253, 259 to 260 (RK), A276, and K280. D253 contributes to the L-methionine binding site. Residue K284 participates in L-methionine binding.

This sequence belongs to the AdoMet synthase family. In terms of assembly, homotetramer; dimer of dimers. Mg(2+) serves as cofactor. The cofactor is K(+).

Its subcellular location is the cytoplasm. The catalysed reaction is L-methionine + ATP + H2O = S-adenosyl-L-methionine + phosphate + diphosphate. The protein operates within amino-acid biosynthesis; S-adenosyl-L-methionine biosynthesis; S-adenosyl-L-methionine from L-methionine: step 1/1. In terms of biological role, catalyzes the formation of S-adenosylmethionine (AdoMet) from methionine and ATP. The overall synthetic reaction is composed of two sequential steps, AdoMet formation and the subsequent tripolyphosphate hydrolysis which occurs prior to release of AdoMet from the enzyme. This Listeria monocytogenes serotype 4b (strain CLIP80459) protein is S-adenosylmethionine synthase.